The chain runs to 116 residues: Ino eighty subunit 4 (116 aa).

The span at 1–15 (MSQESSVLSESQEQL) shows a compositional bias: low complexity. Disordered regions lie at residues 1–40 (MSQE…PVLP) and 70–116 (EERQ…GLDS). The segment covering 84-108 (KGSDDKATRKKEPADEDPEVKQLEK) has biased composition (basic and acidic residues).

In terms of assembly, component of the chromatin-remodeling INO80 complex, at least composed of ARP4, ARP5, ARP8, RVB1, RVB2, TAF14, NHP10, IES1, IES3, IES4, IES6, ACT1, IES2, IES5 and INO80.

It is found in the nucleus. The protein is Ino eighty subunit 4 (IES4) of Saccharomyces cerevisiae (strain ATCC 204508 / S288c) (Baker's yeast).